The primary structure comprises 433 residues: Probable D-serine dehydratase (433 aa).

Lysine 110 is subject to N6-(pyridoxal phosphate)lysine.

The protein belongs to the serine/threonine dehydratase family. DsdA subfamily. It depends on pyridoxal 5'-phosphate as a cofactor.

It carries out the reaction D-serine = pyruvate + NH4(+). The sequence is that of Probable D-serine dehydratase from Oenococcus oeni (strain ATCC BAA-331 / PSU-1).